Reading from the N-terminus, the 352-residue chain is C-C chemokine receptor type 5 (352 aa).

The Extracellular portion of the chain corresponds to 1–30 (MDYSMSTALYDIDYGMSEPCQKIDVKQVAA). Tyr3 is modified (sulfotyrosine). Ser6 carries an O-linked (GalNAc...) serine glycan. 2 positions are modified to sulfotyrosine: Tyr10 and Tyr14. The O-linked (GalNAc...) serine glycan is linked to Ser17. Cystine bridges form between Cys20/Cys269 and Cys101/Cys178. A helical membrane pass occupies residues 31 to 58 (RLLPPLYSLVFIFGFVGNLLVVLILITC). The Cytoplasmic portion of the chain corresponds to 59 to 68 (KKLKSMTDIY). Residues 69–89 (LLNLAISDLLFLLTLPLWAHY) form a helical membrane-spanning segment. At 90–102 (AAAEWDFGGAMCK) the chain is on the extracellular side. Residues 103–124 (VFTGMYHMGYFGGIFFIILLTI) traverse the membrane as a helical segment. Residues 125 to 141 (DRYLAIVHAVFALKART) lie on the Cytoplasmic side of the membrane. Residues 142–166 (VTFGVVTSGVTWVAAILVSLPDIIF) form a helical membrane-spanning segment. Residues 167-198 (TRSQKEGFRCSCSPHFPASQYQFWKNFHTIMR) are Extracellular-facing. The helical transmembrane segment at 199-218 (NILSLVLPLLVMIVCYSGIL) threads the bilayer. The Cytoplasmic portion of the chain corresponds to 219-235 (KTLLRCRNEKRRHRAVR). A helical transmembrane segment spans residues 236 to 260 (LIFAIMVVYFLFWAPYNVVLLLNTF). Residues 261 to 277 (QEFFGLNNCSSSNRLDR) lie on the Extracellular side of the membrane. The helical transmembrane segment at 278-301 (AMQVTETLGMTHCCINPVVYAFVG) threads the bilayer. The Cytoplasmic portion of the chain corresponds to 302 to 352 (EKFRSYLSAFFRKHVAKRLCKHCPLLPRETPEPASSVYTRSTGEQEISVGL). 2 S-palmitoyl cysteine lipidation sites follow: Cys321 and Cys324. A disordered region spans residues 332–352 (PEPASSVYTRSTGEQEISVGL). Phosphoserine; by BARK1 occurs at positions 336, 337, 342, and 349. Over residues 337-346 (SVYTRSTGEQ) the composition is skewed to polar residues.

Belongs to the G-protein coupled receptor 1 family. In terms of assembly, interacts with PRAF2. Efficient ligand binding to CCL3/MIP-1alpha and CCL4/MIP-1beta requires sulfation, O-glycosylation and sialic acid modifications. Glycosylation on Ser-6 is required for efficient binding of CCL4. Interacts with GRK2. Interacts with ARRB1 and ARRB2. Interacts with CNIH4. Interacts with S100A4; this interaction stimulates T-lymphocyte chemotaxis. In terms of processing, sulfated on at least 2 of the N-terminal tyrosines. Sulfation is required for efficient binding of the chemokines, CCL3 and CCL4. Post-translationally, O-glycosylated, but not N-glycosylated. Ser-6 appears to be the major site. Also sialylated glycans present which contribute to chemokine binding. Ser-17 may also be glycosylated and, if so, with small moieties such as a T-antigen. Palmitoylation in the C-terminal is important for cell surface expression. In terms of processing, phosphorylation on serine residues in the C-terminal is stimulated by binding CC chemokines especially by APO-RANTES.

The protein resides in the cell membrane. In terms of biological role, receptor for a number of inflammatory CC-chemokines including CCL3/MIP-1-alpha, CCL4/MIP-1-beta and RANTES and subsequently transduces a signal by increasing the intracellular calcium ion level. May play a role in the control of granulocytic lineage proliferation or differentiation. Participates in T-lymphocyte migration to the infection site by acting as a chemotactic receptor. The chain is C-C chemokine receptor type 5 (CCR5) from Oryctolagus cuniculus (Rabbit).